The following is a 388-amino-acid chain: Succinate--CoA ligase [ADP-forming] subunit beta (388 aa).

The region spanning 9–244 is the ATP-grasp domain; sequence KQLFARYGLP…PSQEDSREAH (236 aa). Residues lysine 46, 53 to 55, glutamate 99, threonine 102, and glutamate 107 each bind ATP; that span reads GRG. Positions 199 and 213 each coordinate Mg(2+). Residues asparagine 264 and 321 to 323 contribute to the substrate site; that span reads GIV.

It belongs to the succinate/malate CoA ligase beta subunit family. As to quaternary structure, heterotetramer of two alpha and two beta subunits. Mg(2+) serves as cofactor.

It carries out the reaction succinate + ATP + CoA = succinyl-CoA + ADP + phosphate. The enzyme catalyses GTP + succinate + CoA = succinyl-CoA + GDP + phosphate. Its pathway is carbohydrate metabolism; tricarboxylic acid cycle; succinate from succinyl-CoA (ligase route): step 1/1. Functionally, succinyl-CoA synthetase functions in the citric acid cycle (TCA), coupling the hydrolysis of succinyl-CoA to the synthesis of either ATP or GTP and thus represents the only step of substrate-level phosphorylation in the TCA. The beta subunit provides nucleotide specificity of the enzyme and binds the substrate succinate, while the binding sites for coenzyme A and phosphate are found in the alpha subunit. The chain is Succinate--CoA ligase [ADP-forming] subunit beta from Erwinia tasmaniensis (strain DSM 17950 / CFBP 7177 / CIP 109463 / NCPPB 4357 / Et1/99).